The following is a 333-amino-acid chain: Glycerol-3-phosphate dehydrogenase [NAD(P)+] (333 aa).

NADPH is bound by residues Trp-16, Arg-36, and Lys-109. Residues Lys-109, Gly-137, and Ser-139 each contribute to the sn-glycerol 3-phosphate site. Ala-141 is an NADPH binding site. The sn-glycerol 3-phosphate site is built by Lys-192, Asp-245, Ser-255, Arg-256, and Asn-257. Catalysis depends on Lys-192, which acts as the Proton acceptor. Arg-256 provides a ligand contact to NADPH. Positions 280 and 282 each coordinate NADPH.

It belongs to the NAD-dependent glycerol-3-phosphate dehydrogenase family.

The protein resides in the cytoplasm. It catalyses the reaction sn-glycerol 3-phosphate + NAD(+) = dihydroxyacetone phosphate + NADH + H(+). The catalysed reaction is sn-glycerol 3-phosphate + NADP(+) = dihydroxyacetone phosphate + NADPH + H(+). It participates in membrane lipid metabolism; glycerophospholipid metabolism. Its function is as follows. Catalyzes the reduction of the glycolytic intermediate dihydroxyacetone phosphate (DHAP) to sn-glycerol 3-phosphate (G3P), the key precursor for phospholipid synthesis. This Parvibaculum lavamentivorans (strain DS-1 / DSM 13023 / NCIMB 13966) protein is Glycerol-3-phosphate dehydrogenase [NAD(P)+].